The primary structure comprises 240 residues: UDP-2,3-diacylglucosamine hydrolase (240 aa).

Mn(2+) is bound by residues D8, H10, D41, N79, and H114. Residue 79-80 (NR) coordinates substrate. 5 residues coordinate substrate: D122, S160, N164, K167, and H195. H195 and H197 together coordinate Mn(2+).

This sequence belongs to the LpxH family. Requires Mn(2+) as cofactor.

Its subcellular location is the cell inner membrane. It carries out the reaction UDP-2-N,3-O-bis[(3R)-3-hydroxytetradecanoyl]-alpha-D-glucosamine + H2O = 2-N,3-O-bis[(3R)-3-hydroxytetradecanoyl]-alpha-D-glucosaminyl 1-phosphate + UMP + 2 H(+). It participates in glycolipid biosynthesis; lipid IV(A) biosynthesis; lipid IV(A) from (3R)-3-hydroxytetradecanoyl-[acyl-carrier-protein] and UDP-N-acetyl-alpha-D-glucosamine: step 4/6. Hydrolyzes the pyrophosphate bond of UDP-2,3-diacylglucosamine to yield 2,3-diacylglucosamine 1-phosphate (lipid X) and UMP by catalyzing the attack of water at the alpha-P atom. Involved in the biosynthesis of lipid A, a phosphorylated glycolipid that anchors the lipopolysaccharide to the outer membrane of the cell. This is UDP-2,3-diacylglucosamine hydrolase from Pectobacterium atrosepticum (strain SCRI 1043 / ATCC BAA-672) (Erwinia carotovora subsp. atroseptica).